The following is a 277-amino-acid chain: Phosphoenolpyruvate synthase regulatory protein (277 aa).

157–164 contributes to the ADP binding site; it reads GVSRCGKT.

This sequence belongs to the pyruvate, phosphate/water dikinase regulatory protein family. PSRP subfamily.

It catalyses the reaction [pyruvate, water dikinase] + ADP = [pyruvate, water dikinase]-phosphate + AMP + H(+). It carries out the reaction [pyruvate, water dikinase]-phosphate + phosphate + H(+) = [pyruvate, water dikinase] + diphosphate. In terms of biological role, bifunctional serine/threonine kinase and phosphorylase involved in the regulation of the phosphoenolpyruvate synthase (PEPS) by catalyzing its phosphorylation/dephosphorylation. The sequence is that of Phosphoenolpyruvate synthase regulatory protein from Escherichia coli O7:K1 (strain IAI39 / ExPEC).